A 297-amino-acid polypeptide reads, in one-letter code: Heme A synthase (297 aa).

The Cytoplasmic portion of the chain corresponds to 1 to 6; that stretch reads MNRKLS. Residues 7 to 27 traverse the membrane as a helical segment; the sequence is IFSAFVTFTMMIVLLMGGTVT. The Extracellular segment spans residues 28–62; it reads KTDSGNGCGTDWPLCHGELIPTNPSVETMIEYSHR. Cysteine 35 and cysteine 42 form a disulfide bridge. Residue glutamate 58 is part of the active site. Heme o is bound at residue histidine 61. Residues 63–83 traverse the membrane as a helical segment; that stretch reads AVTGVVGLLIIALCLWTLVAF. Topologically, residues 84 to 90 are cytoplasmic; it reads KDRLDIK. The helical transmembrane segment at 91–111 threads the bilayer; sequence IFAFLAFIFMLIQSIVGAGAV. Over 112–121 the chain is Extracellular; sequence VWQQSDLVMA. The helical transmembrane segment at 122–142 threads the bilayer; sequence LHFGISLISFASLLILTILIM. Histidine 123 contributes to the heme o binding site. The Cytoplasmic segment spans residues 143–160; it reads ERSGQEFRESVPAFLRKL. A helical transmembrane segment spans residues 161–181; that stretch reads LYGLLIYTLIVVYTGAFVRHV. The Extracellular segment spans residues 182–201; that stretch reads GATYACVGWPVCSQPTMTFE. Cysteine 187 and cysteine 193 are disulfide-bonded. Residues 202 to 222 traverse the membrane as a helical segment; the sequence is AWVQMIHRILAGLLFFYTLFV. Histidine 208 provides a ligand contact to heme b. Residues 223-236 lie on the Cytoplasmic side of the membrane; sequence HYTAIRLKHRTSRT. A helical membrane pass occupies residues 237 to 257; sequence GMLFATFFISCQVATGAWIVL. Residues 258-262 lie on the Extracellular side of the membrane; the sequence is GGHAT. Residues 263–283 form a helical membrane-spanning segment; sequence YVPLLHAFLITCYFGVISYLA. Histidine 268 contacts heme b. Over 284 to 297 the chain is Cytoplasmic; the sequence is YHAFRTRKKDSRLR.

It belongs to the COX15/CtaA family. Type 1 subfamily. Interacts with CtaB. The cofactor is heme b.

The protein localises to the cell membrane. The catalysed reaction is Fe(II)-heme o + 2 A + H2O = Fe(II)-heme a + 2 AH2. It participates in porphyrin-containing compound metabolism; heme A biosynthesis; heme A from heme O: step 1/1. Functionally, catalyzes the conversion of heme O to heme A by two successive hydroxylations of the methyl group at C8. The first hydroxylation forms heme I, the second hydroxylation results in an unstable dihydroxymethyl group, which spontaneously dehydrates, resulting in the formyl group of heme A. The sequence is that of Heme A synthase from Exiguobacterium sibiricum (strain DSM 17290 / CCUG 55495 / CIP 109462 / JCM 13490 / 255-15).